A 483-amino-acid polypeptide reads, in one-letter code: Membrane-bound lytic murein transglycosylase F (483 aa).

The N-terminal stretch at 1–18 (MKGLIARFIAGFALLLWA) is a signal peptide. Residues 19–267 (WDMVFPWQQL…RIEEKYFNHL (249 aa)) are non-LT domain. Residues 269-483 (HFDYVDIQSY…SKESDSTLKE (215 aa)) form an LT domain region. Residue Glu-312 is part of the active site. The segment at 458–483 (QQIQNNEEQPSVPQEISKESDSTLKE) is disordered. Residues 473–483 (ISKESDSTLKE) show a composition bias toward basic and acidic residues.

The protein in the N-terminal section; belongs to the bacterial solute-binding protein 3 family. This sequence in the C-terminal section; belongs to the transglycosylase Slt family.

The protein localises to the cell outer membrane. It catalyses the reaction Exolytic cleavage of the (1-&gt;4)-beta-glycosidic linkage between N-acetylmuramic acid (MurNAc) and N-acetylglucosamine (GlcNAc) residues in peptidoglycan, from either the reducing or the non-reducing ends of the peptidoglycan chains, with concomitant formation of a 1,6-anhydrobond in the MurNAc residue.. In terms of biological role, murein-degrading enzyme that degrades murein glycan strands and insoluble, high-molecular weight murein sacculi, with the concomitant formation of a 1,6-anhydromuramoyl product. Lytic transglycosylases (LTs) play an integral role in the metabolism of the peptidoglycan (PG) sacculus. Their lytic action creates space within the PG sacculus to allow for its expansion as well as for the insertion of various structures such as secretion systems and flagella. The protein is Membrane-bound lytic murein transglycosylase F of Actinobacillus pleuropneumoniae serotype 5b (strain L20).